A 492-amino-acid chain; its full sequence is Probable cobyric acid synthase (492 aa).

The GATase cobBQ-type domain occupies Pro252–Phe444. Cys330 serves as the catalytic Nucleophile. His436 is an active-site residue.

Belongs to the CobB/CobQ family. CobQ subfamily.

It functions in the pathway cofactor biosynthesis; adenosylcobalamin biosynthesis. Functionally, catalyzes amidations at positions B, D, E, and G on adenosylcobyrinic A,C-diamide. NH(2) groups are provided by glutamine, and one molecule of ATP is hydrogenolyzed for each amidation. This is Probable cobyric acid synthase from Methanococcus maripaludis (strain DSM 14266 / JCM 13030 / NBRC 101832 / S2 / LL).